A 250-amino-acid chain; its full sequence is Leucyl/phenylalanyl-tRNA--protein transferase (250 aa).

This sequence belongs to the L/F-transferase family.

It is found in the cytoplasm. It catalyses the reaction N-terminal L-lysyl-[protein] + L-leucyl-tRNA(Leu) = N-terminal L-leucyl-L-lysyl-[protein] + tRNA(Leu) + H(+). It carries out the reaction N-terminal L-arginyl-[protein] + L-leucyl-tRNA(Leu) = N-terminal L-leucyl-L-arginyl-[protein] + tRNA(Leu) + H(+). The catalysed reaction is L-phenylalanyl-tRNA(Phe) + an N-terminal L-alpha-aminoacyl-[protein] = an N-terminal L-phenylalanyl-L-alpha-aminoacyl-[protein] + tRNA(Phe). Its function is as follows. Functions in the N-end rule pathway of protein degradation where it conjugates Leu, Phe and, less efficiently, Met from aminoacyl-tRNAs to the N-termini of proteins containing an N-terminal arginine or lysine. This Xanthomonas oryzae pv. oryzae (strain MAFF 311018) protein is Leucyl/phenylalanyl-tRNA--protein transferase.